The primary structure comprises 240 residues: MATLFIADLHLQTEEPAIVAGFLRFLAVEARQADALYILGDLFEAWIGDDDPNPLHREMAVAIKSLVDSGVPCFFIHGNRDFLIGKRFARESGMTLLPQEKVLDLYGRNVLIMHGDTLCTDDAGYQAFRAKVHNPWVQRLFLTLPLFIRRRIAARLRAGSKAANSSKSLDIMDVNAQTVVAEMEKHRVQWLIHGHTHRPAVHELSANGQPAFRVVLGAWHHEGSMVKVTPDNVELIAFPL.

Mn(2+) contacts are provided by aspartate 8, histidine 10, aspartate 41, asparagine 79, and histidine 114. 79 to 80 is a substrate binding site; that stretch reads NR. 5 residues coordinate substrate: aspartate 122, serine 160, asparagine 164, lysine 167, and histidine 195. Residues histidine 195 and histidine 197 each coordinate Mn(2+).

Belongs to the LpxH family. The cofactor is Mn(2+).

Its subcellular location is the cell inner membrane. It carries out the reaction UDP-2-N,3-O-bis[(3R)-3-hydroxytetradecanoyl]-alpha-D-glucosamine + H2O = 2-N,3-O-bis[(3R)-3-hydroxytetradecanoyl]-alpha-D-glucosaminyl 1-phosphate + UMP + 2 H(+). Its pathway is glycolipid biosynthesis; lipid IV(A) biosynthesis; lipid IV(A) from (3R)-3-hydroxytetradecanoyl-[acyl-carrier-protein] and UDP-N-acetyl-alpha-D-glucosamine: step 4/6. Its function is as follows. Hydrolyzes the pyrophosphate bond of UDP-2,3-diacylglucosamine to yield 2,3-diacylglucosamine 1-phosphate (lipid X) and UMP by catalyzing the attack of water at the alpha-P atom. Involved in the biosynthesis of lipid A, a phosphorylated glycolipid that anchors the lipopolysaccharide to the outer membrane of the cell. This is UDP-2,3-diacylglucosamine hydrolase from Salmonella arizonae (strain ATCC BAA-731 / CDC346-86 / RSK2980).